A 351-amino-acid polypeptide reads, in one-letter code: Fe-S cluster assembly protein DRE2 (351 aa).

The interval Met-1 to Ile-151 is N-terminal SAM-like domain. Disordered regions lie at residues Arg-93–Asp-118 and Arg-157–Asn-186. Polar residues-rich tracts occupy residues Gly-105–Arg-114 and Thr-167–Asn-186. Residues Pro-152 to Met-243 form a linker region. Cys-253, Cys-264, Cys-267, and Cys-269 together coordinate [2Fe-2S] cluster. The segment at Cys-253–Cys-269 is fe-S binding site A. [4Fe-4S] cluster is bound by residues Cys-314, Cys-317, Cys-325, and Cys-328. 2 short sequence motifs (cx2C motif) span residues Cys-314–Cys-317 and Cys-325–Cys-328. A fe-S binding site B region spans residues Cys-314 to Cys-328.

This sequence belongs to the anamorsin family. In terms of assembly, monomer. Interacts with TAH18. Interacts with MIA40. [2Fe-2S] cluster is required as a cofactor. It depends on [4Fe-4S] cluster as a cofactor.

It is found in the cytoplasm. The protein resides in the mitochondrion intermembrane space. In terms of biological role, component of the cytosolic iron-sulfur (Fe-S) protein assembly (CIA) machinery required for the maturation of extramitochondrial Fe-S proteins. Part of an electron transfer chain functioning in an early step of cytosolic Fe-S biogenesis, facilitating the de novo assembly of a [4Fe-4S] cluster on the scaffold complex CFD1-NBP35. Electrons are transferred to DRE2 from NADPH via the FAD- and FMN-containing protein TAH18. TAH18-DRE2 are also required for the assembly of the diferric tyrosyl radical cofactor of ribonucleotide reductase (RNR), probably by providing electrons for reduction during radical cofactor maturation in the catalytic small subunit RNR2. The sequence is that of Fe-S cluster assembly protein DRE2 from Ajellomyces capsulatus (strain NAm1 / WU24) (Darling's disease fungus).